The chain runs to 380 residues: Crotonobetainyl-CoA reductase (380 aa).

The protein belongs to the acyl-CoA dehydrogenase family. Homotetramer. The cofactor is FAD.

The protein resides in the cytoplasm. The catalysed reaction is 4-(trimethylamino)butanoyl-CoA + oxidized [electron-transfer flavoprotein] + H(+) = crotonobetainyl-CoA + reduced [electron-transfer flavoprotein]. Its pathway is amine and polyamine metabolism; carnitine metabolism. Functionally, catalyzes the reduction of crotonobetainyl-CoA to gamma-butyrobetainyl-CoA. The chain is Crotonobetainyl-CoA reductase from Salmonella typhi.